Here is a 334-residue protein sequence, read N- to C-terminus: Phosphate acyltransferase (334 aa).

This sequence belongs to the PlsX family. In terms of assembly, homodimer. Probably interacts with PlsY.

The protein localises to the cytoplasm. The enzyme catalyses a fatty acyl-[ACP] + phosphate = an acyl phosphate + holo-[ACP]. The protein operates within lipid metabolism; phospholipid metabolism. In terms of biological role, catalyzes the reversible formation of acyl-phosphate (acyl-PO(4)) from acyl-[acyl-carrier-protein] (acyl-ACP). This enzyme utilizes acyl-ACP as fatty acyl donor, but not acyl-CoA. This Halothermothrix orenii (strain H 168 / OCM 544 / DSM 9562) protein is Phosphate acyltransferase.